The primary structure comprises 446 residues: Sphingomyelinase phosphodiesterase C (446 aa).

Residues 1 to 26 form the signal peptide; sequence MKFRNNLTLYLIFIIVFTIYISLTIS. A glycan (N-linked (GlcNAc...) asparagine) is linked at N6. The Zn(2+) site is built by D39 and H41. Residues C56 and C78 are joined by a disulfide bond. Residue D107 participates in Zn(2+) binding. Residues N118 and N128 are each glycosylated (N-linked (GlcNAc...) asparagine). Residue N148 coordinates Zn(2+). N-linked (GlcNAc...) asparagine glycosylation is found at N178, N217, N229, and N234. The Zn(2+) site is built by H247, H287, and H289. N-linked (GlcNAc...) asparagine glycosylation is found at N342 and N357. C429 and C442 are joined by a disulfide.

The protein belongs to the acid sphingomyelinase family. Zn(2+) is required as a cofactor.

It localises to the secreted. The polypeptide is Sphingomyelinase phosphodiesterase C (sgmC) (Dictyostelium discoideum (Social amoeba)).